A 411-amino-acid chain; its full sequence is Tyrosine--tRNA ligase (411 aa).

Residue Y34 coordinates L-tyrosine. The 'HIGH' region signature appears at 39 to 48; that stretch reads CTATSLHIGS. L-tyrosine-binding residues include Y171 and Q175. A 'KMSKS' region motif is present at residues 231–235; that stretch reads KMGKT. K234 serves as a coordination point for ATP. The S4 RNA-binding domain maps to 345–411; it reads ISAYNLFYNA…GKKRHILVKV (67 aa).

This sequence belongs to the class-I aminoacyl-tRNA synthetase family. TyrS type 1 subfamily. Homodimer.

Its subcellular location is the cytoplasm. It catalyses the reaction tRNA(Tyr) + L-tyrosine + ATP = L-tyrosyl-tRNA(Tyr) + AMP + diphosphate + H(+). Catalyzes the attachment of tyrosine to tRNA(Tyr) in a two-step reaction: tyrosine is first activated by ATP to form Tyr-AMP and then transferred to the acceptor end of tRNA(Tyr). This chain is Tyrosine--tRNA ligase, found in Rickettsia prowazekii (strain Madrid E).